The primary structure comprises 46 residues: MSKRTLEGSHRKKVRKSGFLSRSQSPTGRRILKARRKKGRKMLVKY.

A disordered region spans residues 1 to 46; that stretch reads MSKRTLEGSHRKKVRKSGFLSRSQSPTGRRILKARRKKGRKMLVKY. The segment covering 30–46 has biased composition (basic residues); it reads RILKARRKKGRKMLVKY.

It belongs to the bacterial ribosomal protein bL34 family.

It is found in the plastid. Its subcellular location is the cyanelle. This chain is Large ribosomal subunit protein bL34c (rpl34), found in Cyanophora paradoxa.